Consider the following 211-residue polypeptide: Beta-crystallin B3 (211 aa).

An N-acetylmethionine modification is found at Met1. Position 2 is an N-acetylalanine; in Beta-crystallin B3, N-terminally processed (Ala2). Residues 2-23 (AEQHGAPEQAAASKSHGGLGGS) are N-terminal arm. Beta/gamma crystallin 'Greek key' domains are found at residues 24–63 (YKVTVYELENFQGKRCELSAECPNLTESLLQKVGSIQVES) and 64–108 (GPWL…RPLH). Residues 109-113 (IDGPD) are connecting peptide. 2 Beta/gamma crystallin 'Greek key' domains span residues 114-155 (HKLH…RVIN) and 156-198 (GTWV…RRIR). The C-terminal arm stretch occupies residues 200 to 211 (QKWHKRGCFLSS).

It belongs to the beta/gamma-crystallin family. As to quaternary structure, homo/heterodimer, or complexes of higher-order. The structure of beta-crystallin oligomers seems to be stabilized through interactions between the N-terminal arms.

In terms of biological role, crystallins are the dominant structural components of the vertebrate eye lens. The sequence is that of Beta-crystallin B3 (Crybb3) from Rattus norvegicus (Rat).